Consider the following 344-residue polypeptide: Intraflagellar transport protein 46 (344 aa).

Residues 1–16 (MDDSMDYPDRDGDDLD) are compositionally biased toward acidic residues. The segment at 1 to 100 (MDDSMDYPDR…IANSDEAPPG (100 aa)) is disordered. Residues 18–30 (FQGTARSQVVQNQ) are compositionally biased toward polar residues.

The protein belongs to the IFT46 family. In terms of assembly, component of the IFT complex B, the core composed of IFT25, IFT27, IFT46, IFT52, IFT74, IFT81 and IFT88 as well as associated subunits IFT20, IFT57, IFT80 and IFT172. Interacts with IFT25, IFT52, IFT70, IFT88 and DAW1.

The protein localises to the cytoplasm. The protein resides in the cytoskeleton. It is found in the cilium basal body. It localises to the cell projection. Its subcellular location is the cilium. Functionally, forms part of a complex involved in intraflagellar transport (IFT), the bi-directional movement of particles required for the assembly, maintenance and functioning of primary cilia. Plays a role in maintaining IFT complex B stability. In Chlamydomonas reinhardtii (Chlamydomonas smithii), this protein is Intraflagellar transport protein 46.